We begin with the raw amino-acid sequence, 335 residues long: MAGRILLGLTLLATSLPLLAMGDAAVVPCISYSTVPGYFLQDDPAVDPKTFDYAKEGFGLIDQAYDTDETLDAELKKLPWRRFEHKVRSLNKHAASNVRFAVLFLGRHGQGFHNVAEAYYGTKAWDDYWSKLDGDGTITWSDAHLTEEGISQAKVARDTWAGQMKNSIPLPEVYYTSPLDRCLATAKFTFSKLELPPSKPFIPTVKELLRETLGVHTCDRRSSRNYIESTYPTYKIEPGFTQKDMLWDPEVRESDSDRDARLKKLLDDIFSHDKSTFMSLTAHGGAIRSILNVIGHREFGLQTGAVIPVLIRIETSTDAPEDPEEDLTIKIQGLN.

Positions 1 to 24 are cleaved as a signal peptide; the sequence is MAGRILLGLTLLATSLPLLAMGDA. Catalysis depends on histidine 108, which acts as the Tele-phosphohistidine intermediate. Residue glutamate 211 is the Proton donor/acceptor of the active site.

It belongs to the phosphoglycerate mutase family.

It localises to the secreted. Its function is as follows. Probable phosphomutase that may have a function related to the manipulation of phosphate groups on carbohydrates. The protein is Probable phosphoglycerate mutase ARB_03491 of Arthroderma benhamiae (strain ATCC MYA-4681 / CBS 112371) (Trichophyton mentagrophytes).